Reading from the N-terminus, the 279-residue chain is Tumor protein p63-regulated gene 1 protein (279 aa).

Positions 1 to 49 (MSTIGSFDGFQPVSLKQEEEDQPSENDHLSTKEGNSGKDPGSRRISRQQ) are disordered. Residues 72–259 (VTRPGAIETA…ILIETYTGLM (188 aa)) enclose the hSac2 domain.

Belongs to the TPRG1 family. As to expression, highly expressed in skin. Also detected at low levels in tongue and esophagus.

The protein localises to the cytoplasm. This chain is Tumor protein p63-regulated gene 1 protein, found in Mus musculus (Mouse).